A 429-amino-acid chain; its full sequence is Adenylosuccinate synthetase (429 aa).

Residues 12–18 (GDEGKGK) and 40–42 (GHT) each bind GTP. Asp13 serves as the catalytic Proton acceptor. Residues Asp13 and Gly40 each coordinate Mg(2+). IMP is bound by residues 13-16 (DEGK), 38-41 (NAGH), Thr128, Arg142, Gln223, Thr238, and Arg302. His41 serves as the catalytic Proton donor. Position 298 to 304 (298 to 304 (TTTGRPR)) interacts with substrate. GTP is bound by residues Arg304, 330-332 (SID), and 412-414 (SVG).

This sequence belongs to the adenylosuccinate synthetase family. Homodimer. Mg(2+) serves as cofactor.

It is found in the cytoplasm. The enzyme catalyses IMP + L-aspartate + GTP = N(6)-(1,2-dicarboxyethyl)-AMP + GDP + phosphate + 2 H(+). It functions in the pathway purine metabolism; AMP biosynthesis via de novo pathway; AMP from IMP: step 1/2. Its function is as follows. Plays an important role in the de novo pathway of purine nucleotide biosynthesis. Catalyzes the first committed step in the biosynthesis of AMP from IMP. The polypeptide is Adenylosuccinate synthetase (Bacillus thuringiensis (strain Al Hakam)).